Reading from the N-terminus, the 738-residue chain is Catalase-peroxidase (738 aa).

A compositionally biased stretch (gly residues) spans 1 to 13 (MDGQDIGAGGGCP). The interval 1–26 (MDGQDIGAGGGCPFSGANTNKGRRSN) is disordered. The tryptophyl-tyrosyl-methioninium (Trp-Tyr) (with M-252) cross-link spans 98 to 226 (WHSAGTYRTA…LAAVQMGLIY (129 aa)). H99 acts as the Proton acceptor in catalysis. Positions 226–252 (YVNPEGPDGNPDPIASGRDIRETFARM) form a cross-link, tryptophyl-tyrosyl-methioninium (Tyr-Met) (with W-98). Residue H267 participates in heme b binding.

This sequence belongs to the peroxidase family. Peroxidase/catalase subfamily. Homodimer or homotetramer. Requires heme b as cofactor. Post-translationally, formation of the three residue Trp-Tyr-Met cross-link is important for the catalase, but not the peroxidase activity of the enzyme.

It catalyses the reaction H2O2 + AH2 = A + 2 H2O. The catalysed reaction is 2 H2O2 = O2 + 2 H2O. Its function is as follows. Bifunctional enzyme with both catalase and broad-spectrum peroxidase activity. This is Catalase-peroxidase from Ruegeria sp. (strain TM1040) (Silicibacter sp.).